A 120-amino-acid chain; its full sequence is Putative non-specific lipid-transfer protein 14 (120 aa).

Positions 1–22 are cleaved as a signal peptide; the sequence is MTRSFSPVVSLFLLLLQTICSA. Intrachain disulfides connect C30-C80, C40-C57, C58-C102, and C78-C116.

The protein belongs to the plant LTP family.

Its function is as follows. Plant non-specific lipid-transfer proteins transfer phospholipids as well as galactolipids across membranes. May play a role in wax or cutin deposition in the cell walls of expanding epidermal cells and certain secretory tissues. The chain is Putative non-specific lipid-transfer protein 14 (LTP14) from Arabidopsis thaliana (Mouse-ear cress).